Reading from the N-terminus, the 445-residue chain is Rab GDP dissociation inhibitor beta (445 aa).

At Met1 the chain carries N-acetylmethionine. Residue Lys112 is modified to N6-acetyllysine. Ser130 carries the post-translational modification Phosphoserine. Lys269 carries the post-translational modification N6-acetyllysine. Phosphoserine is present on Ser382.

It belongs to the Rab GDI family. Interacts with RHOH. Interacts with the GDP-bound inactive forms of RAB3A, RAB3B, RAB3C, RAB5A, RAB5B, RAB5C, RAB8A, RAB8B, RAB10, RAB12, RAB35, and RAB43; binds RAB3D to a lesser extent. Interacts with DZIP1; this interaction negatively regulates the interaction of GDI2 with GDP-bound RAB8A.

The protein localises to the cytoplasm. Its subcellular location is the membrane. The protein resides in the golgi apparatus. It localises to the trans-Golgi network. In terms of biological role, GDP-dissociation inhibitor preventing the GDP to GTP exchange of most Rab proteins. By keeping these small GTPases in their inactive GDP-bound form regulates intracellular membrane trafficking. Negatively regulates protein transport to the cilium and ciliogenesis through the inhibition of RAB8A. This chain is Rab GDP dissociation inhibitor beta (GDI2), found in Sus scrofa (Pig).